Consider the following 578-residue polypeptide: A-type ATP synthase subunit A (578 aa).

228–235 (GPFGSGKT) is an ATP binding site.

The protein belongs to the ATPase alpha/beta chains family. In terms of assembly, has multiple subunits with at least A(3), B(3), C, D, E, F, G, I and proteolipid K(x).

It localises to the cell membrane. It catalyses the reaction ATP + H2O + 4 H(+)(in) = ADP + phosphate + 5 H(+)(out). Its activity is regulated as follows. ATP hydrolysis stimulated by sulfite, ethanol, glycerol, magnesium and zinc ions, inhibited by diethylstilbestrol (DES) and less well by N,N-dicyclohexylcarbodiimide (DCCD). Functionally, component of the A-type ATP synthase that produces ATP from ADP in the presence of a proton gradient across the membrane. The A chain is the catalytic subunit. The chain is A-type ATP synthase subunit A from Methanosarcina mazei (strain ATCC BAA-159 / DSM 3647 / Goe1 / Go1 / JCM 11833 / OCM 88) (Methanosarcina frisia).